The chain runs to 217 residues: TLD domain-containing protein 2 (217 aa).

The interval Met-1 to Val-48 is disordered. Acidic residues predominate over residues Leu-19 to Thr-35. One can recognise a TLDc domain in the interval Gln-56–Ser-217.

The protein belongs to the OXR1 family.

This Bos taurus (Bovine) protein is TLD domain-containing protein 2 (TLDC2).